Reading from the N-terminus, the 299-residue chain is NAD kinase (299 aa).

Asp-75 (proton acceptor) is an active-site residue. Residues 75–76 (DG), 149–150 (ND), Arg-177, Asp-179, 190–195 (TAYALS), Ala-214, and Gln-248 contribute to the NAD(+) site.

The protein belongs to the NAD kinase family. A divalent metal cation serves as cofactor.

The protein resides in the cytoplasm. It carries out the reaction NAD(+) + ATP = ADP + NADP(+) + H(+). Involved in the regulation of the intracellular balance of NAD and NADP, and is a key enzyme in the biosynthesis of NADP. Catalyzes specifically the phosphorylation on 2'-hydroxyl of the adenosine moiety of NAD to yield NADP. This Burkholderia thailandensis (strain ATCC 700388 / DSM 13276 / CCUG 48851 / CIP 106301 / E264) protein is NAD kinase.